The following is a 135-amino-acid chain: ATP synthase epsilon chain (135 aa).

The segment at glutamate 91–phenylalanine 122 is disordered.

This sequence belongs to the ATPase epsilon chain family. In terms of assembly, F-type ATPases have 2 components, CF(1) - the catalytic core - and CF(0) - the membrane proton channel. CF(1) has five subunits: alpha(3), beta(3), gamma(1), delta(1), epsilon(1). CF(0) has three main subunits: a, b and c.

The protein resides in the cellular thylakoid membrane. Its function is as follows. Produces ATP from ADP in the presence of a proton gradient across the membrane. This is ATP synthase epsilon chain from Synechococcus sp. (strain RCC307).